The chain runs to 943 residues: Receptor-like protein 35 (943 aa).

A signal peptide spans 1–31 (MTGSWNPTSIIIPVTLSFLLSFIHNFADVVA). Residues 32 to 897 (APTRHLCLPE…EEEDEEEISW (866 aa)) lie on the Extracellular side of the membrane. Asn67, Asn82, Asn118, Asn147, Asn171, Asn195, Asn219, and Asn222 each carry an N-linked (GlcNAc...) asparagine glycan. 11 LRR repeats span residues 124-148 (LQNL…IGNL), 150-171 (HLTS…SIEN), 172-196 (LSRL…IGNL), 198-220 (HLTS…IGNL), 222-244 (NLTF…IGNL), 245-267 (ARLT…SFGN), 268-292 (LNQL…LLNL), 293-317 (TRLS…SLLS), 319-340 (LMDF…LFNI), 341-364 (PPLI…NISS), and 366-389 (SNLQ…LSRF). Residues Asn291 and Asn312 are each glycosylated (N-linked (GlcNAc...) asparagine). Asn354 and Asn361 each carry an N-linked (GlcNAc...) asparagine glycan. The LRR 12; degenerate repeat unit spans residues 390–414 (VNLTLFDLSHLNTQCRPVDFSIFSH). A glycan (N-linked (GlcNAc...) asparagine) is linked at Asn391. LRR repeat units lie at residues 415-439 (LKSL…ILPY), 440-463 (FKTL…SVSS), 467-490 (SQSI…LRTQ), 491-514 (HELG…LWTL), 515-537 (PNLF…SKKH), 544-568 (KPSM…ICGL), 569-592 (RSLN…MEKL), 593-617 (KSTL…IFES), 619-639 (RSLD…LIRF), 640-665 (SNLE…SLSK), 667-685 (QVLV…EATF), 686-709 (PELR…YFVK), 753-777 (LTIY…IGLL), 778-801 (KELL…MGNL), 802-825 (TALE…LGDL), and 827-850 (FLAY…QFRR). Asn457 carries N-linked (GlcNAc...) asparagine glycosylation. Residues Asn521, Asn524, Asn556, Asn582, and Asn605 are each glycosylated (N-linked (GlcNAc...) asparagine). An N-linked (GlcNAc...) asparagine glycan is attached at Asn653. N-linked (GlcNAc...) asparagine glycosylation is present at Asn699. N-linked (GlcNAc...) asparagine glycosylation is found at Asn784 and Asn800. Residues Asn832, Asn852, and Asn882 are each glycosylated (N-linked (GlcNAc...) asparagine). The chain crosses the membrane as a helical span at residues 898–918 (IAAAIGFIPGIVFGLTIGYIL). Over 919-943 (VSYKPEWFMNPFGRNNRRRRNTTTH) the chain is Cytoplasmic.

The protein belongs to the RLP family.

It localises to the cell membrane. The chain is Receptor-like protein 35 from Arabidopsis thaliana (Mouse-ear cress).